Consider the following 66-residue polypeptide: MLVRTTADFRYCGIFVSVNRVTPELWWGVMGRLRPAGFTNASLSTLSRPATCLTAGSRLLNLLVRP.

Its function is as follows. Repressor of the ant/reb gene. In Escherichia phage P1 (Bacteriophage P1), this protein is Repressor protein C4 (C4).